Here is a 435-residue protein sequence, read N- to C-terminus: Maltodextrin transport system permease protein MalC (435 aa).

A run of 10 helical transmembrane segments spans residues Gly-34–Pro-54, Phe-73–Phe-93, Tyr-130–Val-150, Ile-199–Ile-219, Ile-230–Phe-250, Thr-263–Trp-283, Leu-294–Leu-314, Asn-338–Phe-358, Gly-371–Ile-391, and Met-404–Phe-424. Residues Leu-195 to Ala-423 form the ABC transmembrane type-1 domain.

This sequence belongs to the binding-protein-dependent transport system permease family. MalFG subfamily.

The protein localises to the cell membrane. Its function is as follows. Part of the binding-protein-dependent transport system for maltodextrin; probably responsible for the translocation of the substrate across the membrane. This Streptococcus pneumoniae serotype 4 (strain ATCC BAA-334 / TIGR4) protein is Maltodextrin transport system permease protein MalC (malC).